Reading from the N-terminus, the 146-residue chain is Cyanate hydratase (146 aa).

Residues R87, E90, and S113 contribute to the active site.

Belongs to the cyanase family.

It carries out the reaction cyanate + hydrogencarbonate + 3 H(+) = NH4(+) + 2 CO2. In terms of biological role, catalyzes the reaction of cyanate with bicarbonate to produce ammonia and carbon dioxide. In Trichormus variabilis (strain ATCC 29413 / PCC 7937) (Anabaena variabilis), this protein is Cyanate hydratase.